The following is a 453-amino-acid chain: uncharacterized protein (453 aa).

In terms of domain architecture, TRAM spans 5–63 (LLKKNQSIELTIEDLTHDGSGVGKIDGYPFFIPNTLPGEKVTAKIIKLNKNYGFARMEN). [4Fe-4S] cluster-binding residues include Cys-76, Cys-82, Cys-85, and Cys-162. 4 residues coordinate S-adenosyl-L-methionine: Gln-285, Tyr-314, Glu-335, and Asp-383. The Nucleophile role is filled by Cys-410.

The protein belongs to the class I-like SAM-binding methyltransferase superfamily. RNA M5U methyltransferase family.

This is an uncharacterized protein from Listeria monocytogenes serovar 1/2a (strain ATCC BAA-679 / EGD-e).